We begin with the raw amino-acid sequence, 637 residues long: MNDTIQATDAAHAHSTHQHSMRALAIAAIGVVFGDIGTSPLYALKEAFSPAHGIPLTESSILGVISLLFWAIILVVGIKYLLFVMRADNNGEGGVLALMALSLRPLDSKTRVAGALMALGIFGACMFYGDAVITPAISVMSAVEGLEIATPHLSHLVLPITIVILIALFWIQRHGTALVGKLFGPIMVVWFVVIAALGVYHIARVPGIIAAINPYYAASFMADHLLQAYVVLGSVVLVLTGAEALYADMGHFGAKPIRLAAYGLVMPSLVLNYFGQGALLIQNPKAIENPFFLLAPEWALLPLVVLSTVATVIASQAVISGAYSLTSQAIQLGYVPRMKVLHTSELAIGQIYVPVVNWLLLFVILCIVIGFKSSDNLAAAYGIAVTATMVITTVLACVVMVKVWNWNRLLVGAIIAIFLAIDLGFFGANLLKVAQGGWLPLGIGALLFFLLMTWYKGRHIVKERTAADGIPLEPFLQGLLAHPPHRVSGTAIYLTGNDKLVPVSLLHNLKHNKVLHERTIFLTFVTRDIPYVRDDTRLSSRDAGGGLYIVKAQYGFNETPDVKAVLEEFGRSHDMTFELMDTSFFLARETVVPTHLPGMSIWRERVFAWMHQNAAKPTDFFSIPANRVVELGTKIEI.

A run of 12 helical transmembrane segments spans residues 24–44 (LAIA…LYAL), 64–84 (VISL…LLFV), 113–133 (AGAL…DAVI), 151–171 (PHLS…LFWI), 182–202 (LFGP…VYHI), 225–245 (LLQA…AEAL), 261–281 (AYGL…ALLI), 290–310 (PFFL…STVA), 351–371 (IYVP…VIGF), 381–401 (YGIA…VVMV), 409–429 (LLVG…FGAN), and 433–453 (VAQG…LLMT).

It belongs to the HAK/KUP transporter (TC 2.A.72) family.

The protein resides in the cell inner membrane. It catalyses the reaction K(+)(in) + H(+)(in) = K(+)(out) + H(+)(out). Functionally, transport of potassium into the cell. Likely operates as a K(+):H(+) symporter. This Burkholderia ambifaria (strain MC40-6) protein is Probable potassium transport system protein Kup.